The primary structure comprises 348 residues: N-acetyl-gamma-glutamyl-phosphate reductase (348 aa).

Residue C151 is part of the active site.

Belongs to the NAGSA dehydrogenase family. Type 1 subfamily.

The protein localises to the cytoplasm. It catalyses the reaction N-acetyl-L-glutamate 5-semialdehyde + phosphate + NADP(+) = N-acetyl-L-glutamyl 5-phosphate + NADPH + H(+). Its pathway is amino-acid biosynthesis; L-arginine biosynthesis; N(2)-acetyl-L-ornithine from L-glutamate: step 3/4. Catalyzes the NADPH-dependent reduction of N-acetyl-5-glutamyl phosphate to yield N-acetyl-L-glutamate 5-semialdehyde. The sequence is that of N-acetyl-gamma-glutamyl-phosphate reductase from Lachnospira eligens (strain ATCC 27750 / DSM 3376 / VPI C15-48 / C15-B4) (Eubacterium eligens).